The sequence spans 109 residues: Nucleoid-associated protein ASA_2087 (109 aa).

2 disordered regions span residues 1 to 23 (MFGK…RMQK) and 87 to 109 (QSKS…KLPF). Residues 11–23 (MKQAQQMQERMQK) show a composition bias toward low complexity.

The protein belongs to the YbaB/EbfC family. In terms of assembly, homodimer.

Its subcellular location is the cytoplasm. It localises to the nucleoid. Its function is as follows. Binds to DNA and alters its conformation. May be involved in regulation of gene expression, nucleoid organization and DNA protection. The sequence is that of Nucleoid-associated protein ASA_2087 from Aeromonas salmonicida (strain A449).